Reading from the N-terminus, the 451-residue chain is Phenylalanine--tRNA ligase, mitochondrial (451 aa).

Residues 157 to 160 (SAHQ), Arg-179, 186 to 188 (QHY), and 193 to 195 (QLE) each bind substrate. The residue at position 202 (Lys-202) is an N6-acetyllysine. The substrate site is built by Glu-287 and Phe-312. In terms of domain architecture, FDX-ACB spans 358 to 450 (SKYPAVINDI…AVQLLGVEGR (93 aa)).

The protein belongs to the class-II aminoacyl-tRNA synthetase family. Monomer.

It localises to the mitochondrion matrix. The protein localises to the mitochondrion. It carries out the reaction tRNA(Phe) + L-phenylalanine + ATP = L-phenylalanyl-tRNA(Phe) + AMP + diphosphate + H(+). Is responsible for the charging of tRNA(Phe) with phenylalanine in mitochondrial translation. To a lesser extent, also catalyzes direct attachment of m-Tyr (an oxidized version of Phe) to tRNA(Phe), thereby opening the way for delivery of the misacylated tRNA to the ribosome and incorporation of ROS-damaged amino acid into proteins. The sequence is that of Phenylalanine--tRNA ligase, mitochondrial (FARS2) from Homo sapiens (Human).